A 481-amino-acid polypeptide reads, in one-letter code: UDP-glucose 6-dehydrogenase 1 (481 aa).

NAD(+) is bound by residues 8–13 (GAGYVG), aspartate 33, arginine 38, 86–90 (VNTPT), 127–128 (ST), and glutamate 162. Residues 158–162 (EFLAE), 217–224 (KLAANAFL), and 257–270 (RIGA…VGFG) each bind substrate. Cysteine 273 functions as the Nucleophile in the catalytic mechanism. Position 273–276 (273–276 (CFQK)) interacts with NAD(+). 335–336 (FK) contacts substrate. Arginine 343 provides a ligand contact to NAD(+). Phosphoserine is present on serine 394. Position 448 (arginine 448) interacts with substrate.

The protein belongs to the UDP-glucose/GDP-mannose dehydrogenase family.

It catalyses the reaction UDP-alpha-D-glucose + 2 NAD(+) + H2O = UDP-alpha-D-glucuronate + 2 NADH + 3 H(+). Its pathway is nucleotide-sugar biosynthesis; UDP-alpha-D-glucuronate biosynthesis; UDP-alpha-D-glucuronate from UDP-alpha-D-glucose: step 1/1. Its function is as follows. Involved in the biosynthesis of UDP-glucuronic acid (UDP-GlcA), providing nucleotide sugars for cell-wall polymers. This Oryza sativa subsp. japonica (Rice) protein is UDP-glucose 6-dehydrogenase 1 (UGD1).